The primary structure comprises 536 residues: Putative UDP-glucuronosyltransferase ugt-47 (536 aa).

Positions 1–21 are cleaved as a signal peptide; it reads MFRYHSILLLAILYFFEYGLA. Asparagine 52 and asparagine 308 each carry an N-linked (GlcNAc...) asparagine glycan. Residues 497-517 traverse the membrane as a helical segment; the sequence is IIVPCFFVAFYFIIFPFFKLF.

It belongs to the UDP-glycosyltransferase family.

Its subcellular location is the membrane. The catalysed reaction is glucuronate acceptor + UDP-alpha-D-glucuronate = acceptor beta-D-glucuronoside + UDP + H(+). In Caenorhabditis elegans, this protein is Putative UDP-glucuronosyltransferase ugt-47 (ugt-47).